Reading from the N-terminus, the 195-residue chain is TM2 domain-containing protein C41D11.9 (195 aa).

Positions 1-20 (MLHKILFLICLASFIPTIGS) are cleaved as a signal peptide. The Extracellular segment spans residues 21-136 (ISGTKDVKSK…NWSSGYSWTK (116 aa)). Residues Asn-55, Asn-93, and Asn-127 are each glycosylated (N-linked (GlcNAc...) asparagine). In terms of domain architecture, TM2 spans 131–179 (GYSWTKTMILSVVLGGFGADRFYLGLWKSAIGKLFSFGGLGVWTLVDVV). A helical transmembrane segment spans residues 137–157 (TMILSVVLGGFGADRFYLGLW). Residues 158–163 (KSAIGK) lie on the Cytoplasmic side of the membrane. A helical transmembrane segment spans residues 164–184 (LFSFGGLGVWTLVDVVLIAVG). Over 185-195 (YIKPYDGSMYI) the chain is Extracellular.

This sequence belongs to the TM2 family.

The protein localises to the membrane. This Caenorhabditis elegans protein is TM2 domain-containing protein C41D11.9.